A 392-amino-acid polypeptide reads, in one-letter code: Tyrosine--tRNA ligase (392 aa).

A 'HIGH' region motif is present at residues 41–50 (PTAPDLHLGH). The 'KMSKS' region motif lies at 225–229 (KMSKS). Position 228 (Lys228) interacts with ATP. In terms of domain architecture, S4 RNA-binding spans 330 to 390 (LRAVDFLVKI…VGKKKFYRVV (61 aa)).

Belongs to the class-I aminoacyl-tRNA synthetase family. TyrS type 2 subfamily. As to quaternary structure, homodimer.

It is found in the cytoplasm. It carries out the reaction tRNA(Tyr) + L-tyrosine + ATP = L-tyrosyl-tRNA(Tyr) + AMP + diphosphate + H(+). In terms of biological role, catalyzes the attachment of tyrosine to tRNA(Tyr) in a two-step reaction: tyrosine is first activated by ATP to form Tyr-AMP and then transferred to the acceptor end of tRNA(Tyr). The sequence is that of Tyrosine--tRNA ligase from Aquifex aeolicus (strain VF5).